Consider the following 229-residue polypeptide: 2,3-bisphosphoglycerate-dependent phosphoglycerate mutase (229 aa).

Residues 7–14 (RHGQSEWN), 20–21 (TG), arginine 59, 86–89 (ERHY), lysine 97, 113–114 (RR), and 182–183 (GN) each bind substrate. Histidine 8 acts as the Tele-phosphohistidine intermediate in catalysis. Catalysis depends on glutamate 86, which acts as the Proton donor/acceptor.

The protein belongs to the phosphoglycerate mutase family. BPG-dependent PGAM subfamily.

It carries out the reaction (2R)-2-phosphoglycerate = (2R)-3-phosphoglycerate. It participates in carbohydrate degradation; glycolysis; pyruvate from D-glyceraldehyde 3-phosphate: step 3/5. Catalyzes the interconversion of 2-phosphoglycerate and 3-phosphoglycerate. The polypeptide is 2,3-bisphosphoglycerate-dependent phosphoglycerate mutase (Listeria welshimeri serovar 6b (strain ATCC 35897 / DSM 20650 / CCUG 15529 / CIP 8149 / NCTC 11857 / SLCC 5334 / V8)).